A 401-amino-acid polypeptide reads, in one-letter code: Protein zntC (401 aa).

A run of 3 helical transmembrane segments spans residues 33–53 (GGLI…PWFL), 61–81 (LVSV…GAGF), and 114–134 (ITIV…SGGL). Positions 141-247 (NHMDLSQHNH…SHKDEKDSEK (107 aa)) are disordered. The segment covering 167–184 (GDDDDDDVNEDQEEDSTK) has biased composition (acidic residues). The span at 200–209 (HNSSNSSSNG) shows a compositional bias: low complexity. The segment covering 212 to 225 (HGLKKKKKSKKEHG) has biased composition (basic residues). A compositionally biased stretch (basic and acidic residues) spans 226–247 (HGHNHDHSSNGHSHKDEKDSEK). 5 consecutive transmembrane segments (helical) span residues 256 to 276 (AWVF…GLGS), 285 to 305 (GLLI…GIAI), 316 to 336 (CIAL…GMAI), 351 to 371 (GIIL…ELLP), and 381 to 401 (KLKL…ALWV).

The protein belongs to the ZIP transporter (TC 2.A.5) family.

It is found in the membrane. Functionally, may transport divalent cations. May participate, with dstA, in the regulation of the differentiation of stalk cells during development. This Dictyostelium discoideum (Social amoeba) protein is Protein zntC (zntC).